The chain runs to 146 residues: Small ribosomal subunit protein bS6 (146 aa).

Residues 94–146 (GPITTPSPMMQEGKSRPPHSSDEDSENTAPAKAKTADSPGEDTRTTEESDPKP) form a disordered region. Composition is skewed to basic and acidic residues over residues 106–115 (GKSRPPHSSD) and 134–146 (EDTRTTEESDPKP).

This sequence belongs to the bacterial ribosomal protein bS6 family.

Binds together with bS18 to 16S ribosomal RNA. In Nitrosomonas europaea (strain ATCC 19718 / CIP 103999 / KCTC 2705 / NBRC 14298), this protein is Small ribosomal subunit protein bS6.